The primary structure comprises 130 residues: Small ribosomal subunit protein uS9 (130 aa).

It belongs to the universal ribosomal protein uS9 family.

The sequence is that of Small ribosomal subunit protein uS9 from Shewanella sediminis (strain HAW-EB3).